We begin with the raw amino-acid sequence, 402 residues long: Type II NADH:quinone oxidoreductase (402 aa).

Residues 12-16 (GAGYA), 39-40 (NK), and valine 83 each bind FAD. Residue glutamate 172 is part of the active site. Residues aspartate 302, 319–320 (AQ), and lysine 379 contribute to the FAD site.

Belongs to the NADH dehydrogenase family. FAD is required as a cofactor.

The protein resides in the cell membrane. It catalyses the reaction a quinone + NADH + H(+) = a quinol + NAD(+). Alternative, nonproton pumping NADH:quinone oxidoreductase that delivers electrons to the respiratory chain by oxidation of NADH and reduction of quinones, and contributes to the regeneration of NAD(+). This is Type II NADH:quinone oxidoreductase from Staphylococcus haemolyticus (strain JCSC1435).